The following is a 441-amino-acid chain: Transcription factor TOXE (441 aa).

Positions 14–40 (TDINERRKLQNRVAQRKYRTRQKTRMK) are basic DNA-binding region. The segment at 209–243 (FEPNDQRKTENLPREPCGSCPSSSHGYSPTSGNPS) is disordered. Basic and acidic residues predominate over residues 212 to 221 (NDQRKTENLP). The segment covering 228-241 (CPSSSHGYSPTSGN) has biased composition (polar residues). ANK repeat units follow at residues 289 to 318 (DQFS…PLDI), 322 to 351 (SGKT…EMLA), 355 to 384 (EGNS…SCRE), and 413 to 440 (EGMT…SANV).

This sequence belongs to the bZIP family. Monomer.

It localises to the nucleus. Functionally, transcription factor, part of the diffuse TOX2 gene cluster that mediates the biosynthesis of the HC-toxin, cyclic tetrapeptide of structure cyclo(D-Pro-L-Ala-D-Ala-L-Aeo), where Aeo stands for 2-amino-9,10-epoxi-8-oxodecanoic acid. HC-toxin is a determinant of specificity and virulence in the interaction between the producing fungus and its host, maize. TOXE is a pathway-specific transcription factor which coordinates the expression of genes involved in HC-toxin biosynthesis. Binds to the tox-box, a 10-bp motif with the consensus 5'-ATCTCNCGNA-3', which is found in the promoter of all genes involved in HC-toxin biosynthesis. Required for pathogenicity of the fungus on maize. The sequence is that of Transcription factor TOXE from Cochliobolus carbonum (Maize leaf spot fungus).